A 290-amino-acid chain; its full sequence is HTH-type transcriptional regulator BudR (290 aa).

In terms of domain architecture, HTH lysR-type spans 1-58 (MELRYLRYFVAVAEARNFTRAAHDLGISQPPLSQQIQRLEREIGTPLLRRLTRGVELT). Residues 18-37 (FTRAAHDLGISQPPLSQQIQ) constitute a DNA-binding region (H-T-H motif).

It belongs to the LysR transcriptional regulatory family.

Regulator of the budABC operon for 2,3-butanediol synthesis. In Raoultella terrigena (Klebsiella terrigena), this protein is HTH-type transcriptional regulator BudR (budR).